Consider the following 501-residue polypeptide: Glucose-6-phosphate exchanger SLC37A2 (501 aa).

Residues 19 to 39 (SWFRGLILLLTFLIYACYHMS) traverse the membrane as a helical segment. N53, N62, and N68 each carry an N-linked (GlcNAc...) asparagine glycan. The next 5 membrane-spanning stretches (helical) occupy residues 88 to 108 (GGVD…SGVF), 118 to 138 (LSAG…GYFW), 145 to 165 (YFVV…PSVV), 189 to 209 (SVGN…QWGL), and 210 to 230 (SFIV…LFLI). The interval 240–262 (PPQHHGEPAENQDNPEDPGNSPC) is disordered. The next 6 membrane-spanning stretches (helical) occupy residues 302–322 (LCLL…PLYI), 334–354 (GDLS…AGLV), 362–382 (ATTC…YNYI), 391–411 (IVML…ITTA), 434–454 (AIID…AGLI), and 462–482 (VFYM…RLVY).

The protein belongs to the major facilitator superfamily. Organophosphate:Pi antiporter (OPA) (TC 2.A.1.4) family. In terms of tissue distribution, detected in intestine and pancreas. Lower expression is also detected in liver and kidney.

The protein resides in the endoplasmic reticulum membrane. It carries out the reaction D-glucose 6-phosphate(in) + phosphate(out) = D-glucose 6-phosphate(out) + phosphate(in). Inhibited by vanadate but not by chlorogenic acid. Inorganic phosphate and glucose-6-phosphate antiporter. May transport cytoplasmic glucose-6-phosphate into the lumen of the endoplasmic reticulum and translocate inorganic phosphate into the opposite direction. Independent of a lumenal glucose-6-phosphatase. May not play a role in homeostatic regulation of blood glucose levels. The protein is Glucose-6-phosphate exchanger SLC37A2 of Homo sapiens (Human).